Here is a 152-residue protein sequence, read N- to C-terminus: Endoribonuclease YbeY (152 aa).

Residues histidine 113, histidine 117, and histidine 123 each coordinate Zn(2+).

It belongs to the endoribonuclease YbeY family. Requires Zn(2+) as cofactor.

The protein resides in the cytoplasm. Functionally, single strand-specific metallo-endoribonuclease involved in late-stage 70S ribosome quality control and in maturation of the 3' terminus of the 16S rRNA. This chain is Endoribonuclease YbeY, found in Acidovorax sp. (strain JS42).